We begin with the raw amino-acid sequence, 422 residues long: Glutamyl-tRNA reductase (422 aa).

Residues 49 to 52, Ser-110, 115 to 117, and Gln-121 contribute to the substrate site; these read TCNR and EPQ. Catalysis depends on Cys-50, which acts as the Nucleophile. An NADP(+)-binding site is contributed by 190-195; it reads GAGETI.

The protein belongs to the glutamyl-tRNA reductase family. Homodimer.

The enzyme catalyses (S)-4-amino-5-oxopentanoate + tRNA(Glu) + NADP(+) = L-glutamyl-tRNA(Glu) + NADPH + H(+). It functions in the pathway porphyrin-containing compound metabolism; protoporphyrin-IX biosynthesis; 5-aminolevulinate from L-glutamyl-tRNA(Glu): step 1/2. In terms of biological role, catalyzes the NADPH-dependent reduction of glutamyl-tRNA(Glu) to glutamate 1-semialdehyde (GSA). The polypeptide is Glutamyl-tRNA reductase (Colwellia psychrerythraea (strain 34H / ATCC BAA-681) (Vibrio psychroerythus)).